Consider the following 177-residue polypeptide: Large ribosomal subunit protein uL6 (177 aa).

The protein belongs to the universal ribosomal protein uL6 family. Part of the 50S ribosomal subunit.

This protein binds to the 23S rRNA, and is important in its secondary structure. It is located near the subunit interface in the base of the L7/L12 stalk, and near the tRNA binding site of the peptidyltransferase center. The sequence is that of Large ribosomal subunit protein uL6 from Acinetobacter baumannii (strain SDF).